Here is a 74-residue protein sequence, read N- to C-terminus: Peptide BmKb1 (74 aa).

The first 22 residues, 1 to 22, serve as a signal peptide directing secretion; sequence MEIKYLLTVFLVLLIVSDHCQA. At Lys-40 the chain carries Lysine amide. The propeptide occupies 46 to 74; the sequence is DLNGYIDHFKNFRKRDAELEELLSKLPIY.

Belongs to the non-disulfide-bridged peptide (NDBP) superfamily. Short antimicrobial peptide (group 4) family. In terms of tissue distribution, expressed by the venom gland.

Its subcellular location is the secreted. It localises to the target cell membrane. Functionally, has antibacterial activity against Gram-positive bacteria S.aureus, M.luteus, B.subtilis, and Gram-negative bacteria E.coli, and P.aeruginosa. The polypeptide is Peptide BmKb1 (Olivierus martensii (Manchurian scorpion)).